We begin with the raw amino-acid sequence, 269 residues long: Short-chain dehydrogenase/reductase ABA4 (269 aa).

7 residues coordinate NADP(+): Ile-34, Asp-80, Arg-144, Tyr-174, Lys-178, Ile-207, and Thr-209. Tyr-174 serves as the catalytic Proton donor. Catalysis depends on Lys-178, which acts as the Lowers pKa of active site Tyr.

It belongs to the short-chain dehydrogenases/reductases (SDR) family.

Its pathway is hormone biosynthesis. Functionally, short-chain dehydrogenase/reductase involved in the biosynthesis of abscisic acid (ABA), a phytohormone that acts antagonistically toward salicylic acid (SA), jasmonic acid (JA) and ethylene (ETH) signaling, to impede plant defense responses. During pathogen-host interaction, ABA plays a dual role in disease severity by increasing plant susceptibility and accelerating pathogenesis in the fungus itself. The first step of the pathway catalyzes the reaction from farnesyl diphosphate to alpha-ionylideneethane performed by the alpha-ionylideneethane synthase ABA3 via a three-step reaction mechanism involving 2 neutral intermediates, beta-farnesene and allofarnesene. The cytochrome P450 monooxygenase ABA1 might then be involved in the conversion of alpha-ionylideneethane to alpha-ionylideneacetic acid. Alpha-ionylideneacetic acid is further converted to abscisic acid in 2 steps involving the cytochrome P450 monooxygenase ABA2 and the short-chain dehydrogenase/reductase ABA4, via the intermediates 1'-deoxy-ABA or 1',4'-trans-diol-ABA, depending on the order of action of these 2 enzymes. ABA2 is responsible for the hydroxylation of carbon atom C-1' and ABA4 might be involved in the oxidation of the C-4' carbon atom. This chain is Short-chain dehydrogenase/reductase ABA4 (ABA4), found in Pyricularia oryzae (strain Y34) (Rice blast fungus).